The chain runs to 165 residues: NADPH-dependent 7-cyano-7-deazaguanine reductase (165 aa).

C56 serves as the catalytic Thioimide intermediate. Residue D63 is the Proton donor of the active site. Residues 78-80 and 97-98 contribute to the substrate site; these read VES and HE.

It belongs to the GTP cyclohydrolase I family. QueF type 1 subfamily.

Its subcellular location is the cytoplasm. The enzyme catalyses 7-aminomethyl-7-carbaguanine + 2 NADP(+) = 7-cyano-7-deazaguanine + 2 NADPH + 3 H(+). Its pathway is tRNA modification; tRNA-queuosine biosynthesis. Functionally, catalyzes the NADPH-dependent reduction of 7-cyano-7-deazaguanine (preQ0) to 7-aminomethyl-7-deazaguanine (preQ1). The chain is NADPH-dependent 7-cyano-7-deazaguanine reductase from Bacillus mycoides (strain KBAB4) (Bacillus weihenstephanensis).